The sequence spans 773 residues: Cellobiose dehydrogenase (773 aa).

The signal sequence occupies residues 1-18 (MLGRSLLALLPFVGLAFS). Q19 carries the pyrrolidone carboxylic acid modification. Residues 19–208 (QSASQFTDPT…YQNYLNGDSG (190 aa)) form a heme domain region. Heme contacts are provided by M83 and H181. Residues 203-227 (LNGDSGNPTTTSTKPTSTSSSVTTG) form a disordered region. The segment covering 210 to 227 (PTTTSTKPTSTSSSVTTG) has biased composition (low complexity). The tract at residues 235-773 (YDYIIVGAGP…AKILALAGGP (539 aa)) is oxidoreductase. 236-265 (DYIIVGAGPGGIIAADRLSEAGKKVLLLER) is a binding site for FAD. H707 (proton acceptor) is an active-site residue.

In the C-terminal section; belongs to the GMC oxidoreductase family. Requires FAD as cofactor. Heme is required as a cofactor.

It is found in the secreted. The catalysed reaction is D-cellobiose + A = D-cellobiono-1,5-lactone + AH2. In terms of biological role, degrades both lignin and cellulose. Oxidizes cellobiose to cellobionolactone. The chain is Cellobiose dehydrogenase (CDH-1) from Phanerodontia chrysosporium (White-rot fungus).